A 175-amino-acid chain; its full sequence is Small ribosomal subunit protein uS5 (175 aa).

The S5 DRBM domain occupies 19–82; the sequence is WVDRLVSVNR…DDAKKNVIRV (64 aa).

It belongs to the universal ribosomal protein uS5 family. As to quaternary structure, part of the 30S ribosomal subunit. Contacts proteins S4 and S8.

Its function is as follows. With S4 and S12 plays an important role in translational accuracy. In terms of biological role, located at the back of the 30S subunit body where it stabilizes the conformation of the head with respect to the body. The chain is Small ribosomal subunit protein uS5 from Salinibacter ruber (strain DSM 13855 / M31).